The following is a 617-amino-acid chain: BPI fold-containing family B member 4 (617 aa).

The signal sequence occupies residues 1 to 17; sequence MWTAWCVAALSVAAVCG. The disordered stretch occupies residues 124-149; it reads RPSDSAYHRGPGRYRSAADPSSAGRL. Asn275 carries N-linked (GlcNAc...) asparagine glycosylation. Residues Cys297 and Cys334 are joined by a disulfide bond.

This sequence belongs to the BPI/LBP/Plunc superfamily. BPI/LBP family. As to expression, highly expressed in olfactory mucosa but undetectable in thymus, kidney, lung, brain, spleen and liver.

It is found in the secreted. The protein resides in the cytoplasm. Its function is as follows. May have the capacity to recognize and bind specific classes of odorants. May act as a carrier molecule, transporting odorants across the mucus layer to access receptor sites. May serve as a primary defense mechanism by recognizing and removing potentially harmful odorants or pathogenic microorganisms from the mucosa or clearing excess odorant from mucus to enable new odorant stimuli to be received. In Rattus norvegicus (Rat), this protein is BPI fold-containing family B member 4 (Bpifb4).